Consider the following 351-residue polypeptide: Probable minor fimbrial subunit LpfD (351 aa).

The signal sequence occupies residues 1–22 (MKAAIALSLLGCVFGFSGKAFA).

It belongs to the fimbrial protein family.

The protein localises to the fimbrium. In terms of biological role, part of the lpfABCC'DE fimbrial operon. LP fimbriae may participate in the interaction with eukaryotic cells by assisting in microcolony formation. In Escherichia coli O157:H7, this protein is Probable minor fimbrial subunit LpfD (lpfD).